Reading from the N-terminus, the 313-residue chain is Type II restriction enzyme BsuMI component YdiR (313 aa).

The disordered stretch occupies residues 289 to 313; it reads FVSGDIVDENATTSSDDLPEDFENN.

In terms of assembly, bsuMI restriction activity requires YdiR, YdiS and YdjA.

The enzyme catalyses Endonucleolytic cleavage of DNA to give specific double-stranded fragments with terminal 5'-phosphates.. Its function is as follows. A P subtype restriction enzyme that recognizes the double-stranded sequence 5'-CTCGAG-3'; the cleavage site is unknown. The sequence is that of Type II restriction enzyme BsuMI component YdiR (ydiR) from Bacillus subtilis (strain 168).